Here is a 167-residue protein sequence, read N- to C-terminus: MMINEQIRAREVRLVGANGDQLGIKSRNDALDLAANLNLDLVLVAPNAKPPVCRIMDYGKFRFEQQKKEKEQRKNQKVISMKEVRLSPTIDEHDFNTKLRNAIKFLEKGDKVKASIRFKGRAITHKEIGQRVLDRFSEACAEVSTIESKPKMEGRSMFLVLAPKNDK.

It belongs to the IF-3 family. As to quaternary structure, monomer.

It localises to the cytoplasm. Its function is as follows. IF-3 binds to the 30S ribosomal subunit and shifts the equilibrium between 70S ribosomes and their 50S and 30S subunits in favor of the free subunits, thus enhancing the availability of 30S subunits on which protein synthesis initiation begins. The polypeptide is Translation initiation factor IF-3 (Bacillus anthracis).